A 488-amino-acid chain; its full sequence is Cytochrome P450 71A24 (488 aa).

Residues 3–23 (MMMMIILLLCSIILITILFFK) form a helical membrane-spanning segment. Position 433 (C433) interacts with heme.

The protein belongs to the cytochrome P450 family. Heme serves as cofactor.

Its subcellular location is the membrane. This Arabidopsis thaliana (Mouse-ear cress) protein is Cytochrome P450 71A24 (CYP71A24).